We begin with the raw amino-acid sequence, 553 residues long: Methyl-coenzyme M reductase II subunit alpha (553 aa).

Gln150 provides a ligand contact to coenzyme F430. Residues Arg228, 259 to 260 (KH), and Arg273 each bind coenzyme B. A Pros-methylhistidine modification is found at His260. 5-methylarginine is present on Arg274. Tyr335 serves as a coordination point for coenzyme M. Gln402 is modified (2-methylglutamine). A coenzyme M-binding site is contributed by Tyr446. Residue Gly447 is modified to 1-thioglycine. Asp452 is subject to (Z)-2,3-didehydroaspartate. Cys454 carries the post-translational modification S-methylcysteine.

It belongs to the methyl-coenzyme M reductase alpha subunit family. As to quaternary structure, MCR is a hexamer of two alpha, two beta, and two gamma chains, forming a dimer of heterotrimers. Coenzyme F430 serves as cofactor. Post-translationally, the alpha subunit contains six modified amino acids near the active site region. Is methylated on His-260, Arg-274, Gln-402 and Cys-454, probably by the action of specific S-adenosylmethionine-dependent methyltransferases. Also contains a thioglycine at position 447, forming a thiopeptide bond. Contains a didehydroaspartate residue at position 452. The methylation on C5 of Arg-274 is a post-translational methylation not essential in vivo, but which plays a role for the stability and structural integrity of MCR.

The catalysed reaction is coenzyme B + methyl-coenzyme M = methane + coenzyme M-coenzyme B heterodisulfide. The protein operates within one-carbon metabolism; methyl-coenzyme M reduction; methane from methyl-coenzyme M: step 1/1. Its function is as follows. Component of the methyl-coenzyme M reductase (MCR) I that catalyzes the reductive cleavage of methyl-coenzyme M (CoM-S-CH3 or 2-(methylthio)ethanesulfonate) using coenzyme B (CoB or 7-mercaptoheptanoylthreonine phosphate) as reductant which results in the production of methane and the mixed heterodisulfide of CoB and CoM (CoM-S-S-CoB). This is the final step in methanogenesis. This Methanothermobacter marburgensis (strain ATCC BAA-927 / DSM 2133 / JCM 14651 / NBRC 100331 / OCM 82 / Marburg) (Methanobacterium thermoautotrophicum) protein is Methyl-coenzyme M reductase II subunit alpha (mrtA).